The sequence spans 142 residues: Small ribosomal subunit protein bS6 (142 aa).

Residues 110–142 (NKKPSHAKEKHEKTEHAHSHHTEEAGSKESHSE) form a disordered region.

Belongs to the bacterial ribosomal protein bS6 family.

Its function is as follows. Binds together with bS18 to 16S ribosomal RNA. The chain is Small ribosomal subunit protein bS6 from Helicobacter acinonychis (strain Sheeba).